A 194-amino-acid polypeptide reads, in one-letter code: E3 ubiquitin-protein ligase RNF4 (194 aa).

The segment covering 1–12 has biased composition (basic residues); sequence MSTRNPQRKRRG. Residues 1–20 form a required for ubiquitination activity region; the sequence is MSTRNPQRKRRGGAVNSRQT. Positions 1 to 36 are disordered; it reads MSTRNPQRKRRGGAVNSRQTQKRTRETTSTPEISLE. A mediates interaction with TRPS1 region spans residues 6–65; sequence PQRKRRGGAVNSRQTQKRTRETTSTPEISLEAEPIELVETVGDEIVDLTCESLEPVVVDL. 4 short sequence motifs (SUMO interaction motif) span residues 40–43, 50–53, 61–63, and 71–74; these read IELV, IVDL, VVV, and VVIV. Phosphoserine is present on residues S98 and S99. Zn(2+)-binding residues include C136, C139, C158, H160, C163, C166, C177, and C180. The RING-type zinc-finger motif lies at 136–181; that stretch reads CPICMDGYSEIVQNGRLIVSTECGHVFCSQCLRDSLKNANTCPTCR.

Homodimer (via RING-type zinc finger domain). Interacts with GSC2. Interacts with AR/the androgen receptor and TBP. Interacts with TCF20. Interacts with PATZ1. Interacts with TRPS1; negatively regulates TRPS1 transcriptional repressor activity. Interacts with PML (isoform PML-1, isoform PML-2, isoform PML-3, isoform PML-4, isoform PML-5 and isoform PML-6). Interacts with PRDM1/Blimp-1. Post-translationally, sumoylated; conjugated by one or two SUMO1 moieties. In terms of processing, autoubiquitinated. As to expression, widely expressed with highest levels in testis.

The protein localises to the cytoplasm. Its subcellular location is the nucleus. It localises to the nucleoplasm. It is found in the PML body. It catalyses the reaction S-ubiquitinyl-[E2 ubiquitin-conjugating enzyme]-L-cysteine + [acceptor protein]-L-lysine = [E2 ubiquitin-conjugating enzyme]-L-cysteine + N(6)-ubiquitinyl-[acceptor protein]-L-lysine.. It functions in the pathway protein modification; protein ubiquitination. In terms of biological role, E3 ubiquitin-protein ligase which binds polysumoylated chains covalently attached to proteins and mediates 'Lys-6'-, 'Lys-11'-, 'Lys-48'- and 'Lys-63'-linked polyubiquitination of those substrates and their subsequent targeting to the proteasome for degradation. Regulates the degradation of several proteins including PML and the transcriptional activator PEA3. Involved in chromosome alignment and spindle assembly, it regulates the kinetochore CENPH-CENPI-CENPK complex by targeting polysumoylated CENPI to proteasomal degradation. Regulates the cellular responses to hypoxia and heat shock through degradation of respectively EPAS1 and PARP1. Alternatively, it may also bind DNA/nucleosomes and have a more direct role in the regulation of transcription for instance enhancing basal transcription and steroid receptor-mediated transcriptional activation. Catalyzes ubiquitination of sumoylated PARP1 in response to PARP1 trapping to chromatin, leading to PARP1 removal from chromatin by VCP/p97. The polypeptide is E3 ubiquitin-protein ligase RNF4 (Rattus norvegicus (Rat)).